The following is a 638-amino-acid chain: 1-deoxy-D-xylulose-5-phosphate synthase (638 aa).

Thiamine diphosphate contacts are provided by residues histidine 72 and glycine 113–alanine 115. Aspartate 144 is a binding site for Mg(2+). Thiamine diphosphate-binding positions include glycine 145–alanine 146, asparagine 174, tyrosine 287, and glutamate 370. Asparagine 174 serves as a coordination point for Mg(2+).

Belongs to the transketolase family. DXPS subfamily. As to quaternary structure, homodimer. The cofactor is Mg(2+). Requires thiamine diphosphate as cofactor.

It catalyses the reaction D-glyceraldehyde 3-phosphate + pyruvate + H(+) = 1-deoxy-D-xylulose 5-phosphate + CO2. Its pathway is metabolic intermediate biosynthesis; 1-deoxy-D-xylulose 5-phosphate biosynthesis; 1-deoxy-D-xylulose 5-phosphate from D-glyceraldehyde 3-phosphate and pyruvate: step 1/1. Catalyzes the acyloin condensation reaction between C atoms 2 and 3 of pyruvate and glyceraldehyde 3-phosphate to yield 1-deoxy-D-xylulose-5-phosphate (DXP). This chain is 1-deoxy-D-xylulose-5-phosphate synthase, found in Picosynechococcus sp. (strain ATCC 27264 / PCC 7002 / PR-6) (Agmenellum quadruplicatum).